A 286-amino-acid chain; its full sequence is 4-hydroxybenzoate octaprenyltransferase (286 aa).

9 helical membrane-spanning segments follow: residues Ile-22–Val-42, Phe-45–Ile-65, Leu-90–Val-110, Leu-113–Phe-133, Gln-142–Gly-162, Trp-169–Val-189, Leu-212–Glu-232, Val-236–Ile-256, and Phe-265–Ala-285.

The protein belongs to the UbiA prenyltransferase family. Requires Mg(2+) as cofactor.

The protein localises to the cell inner membrane. It carries out the reaction all-trans-octaprenyl diphosphate + 4-hydroxybenzoate = 4-hydroxy-3-(all-trans-octaprenyl)benzoate + diphosphate. It functions in the pathway cofactor biosynthesis; ubiquinone biosynthesis. In terms of biological role, catalyzes the prenylation of para-hydroxybenzoate (PHB) with an all-trans polyprenyl group. Mediates the second step in the final reaction sequence of ubiquinone-8 (UQ-8) biosynthesis, which is the condensation of the polyisoprenoid side chain with PHB, generating the first membrane-bound Q intermediate 3-octaprenyl-4-hydroxybenzoate. In Tolumonas auensis (strain DSM 9187 / NBRC 110442 / TA 4), this protein is 4-hydroxybenzoate octaprenyltransferase.